Here is a 657-residue protein sequence, read N- to C-terminus: Katanin p80 WD40 repeat-containing subunit B1 (657 aa).

WD repeat units lie at residues alanine 18 to serine 58, glycine 61 to threonine 100, glycine 103 to lysine 142, serine 145 to glutamate 184, glycine 187 to cysteine 226, and glutamate 229 to valine 269. 2 disordered regions span residues asparagine 318–proline 410 and valine 423–proline 454. A compositionally biased stretch (polar residues) spans proline 325–lysine 345. Residues histidine 351–phenylalanine 385 show a composition bias toward basic and acidic residues.

The protein belongs to the WD repeat KATNB1 family. In terms of assembly, interacts with KATNA1. This interaction enhances the microtubule binding and severing activity of KATNA1 and also targets this activity to the centrosome.

It is found in the cytoplasm. The protein resides in the cytoskeleton. Its subcellular location is the microtubule organizing center. It localises to the centrosome. The protein localises to the spindle pole. It is found in the spindle. Participates in a complex which severs microtubules in an ATP-dependent manner. May act to target the enzymatic subunit of this complex to sites of action such as the centrosome. Microtubule severing may promote rapid reorganization of cellular microtubule arrays and the release of microtubules from the centrosome following nucleation. The polypeptide is Katanin p80 WD40 repeat-containing subunit B1 (Gallus gallus (Chicken)).